The primary structure comprises 276 residues: Large ribosomal subunit protein uL2 (276 aa).

The segment at 222-276 (GVAMNPIDHPLGGGEGRSSGGRHPVSPWGMPTKGYKTRDRKKASSKLIIKRRGQK) is disordered. Positions 259 to 276 (RDRKKASSKLIIKRRGQK) are enriched in basic residues.

This sequence belongs to the universal ribosomal protein uL2 family. Part of the 50S ribosomal subunit. Forms a bridge to the 30S subunit in the 70S ribosome.

One of the primary rRNA binding proteins. Required for association of the 30S and 50S subunits to form the 70S ribosome, for tRNA binding and peptide bond formation. It has been suggested to have peptidyltransferase activity; this is somewhat controversial. Makes several contacts with the 16S rRNA in the 70S ribosome. In Nitratidesulfovibrio vulgaris (strain ATCC 29579 / DSM 644 / CCUG 34227 / NCIMB 8303 / VKM B-1760 / Hildenborough) (Desulfovibrio vulgaris), this protein is Large ribosomal subunit protein uL2.